The sequence spans 85 residues: Large ribosomal subunit protein bL27 (85 aa).

The disordered stretch occupies residues 1 to 20 (MAHKKAGGSTRNGRDSEAKR).

This sequence belongs to the bacterial ribosomal protein bL27 family.

The polypeptide is Large ribosomal subunit protein bL27 (Enterobacter sp. (strain 638)).